The primary structure comprises 292 residues: Pantothenate synthetase (292 aa).

Methionine 30 to histidine 37 is an ATP binding site. The Proton donor role is filled by histidine 37. Glutamine 61 is a (R)-pantoate binding site. Glutamine 61 is a binding site for beta-alanine. Glycine 147–aspartate 150 contributes to the ATP binding site. Glutamine 153 contributes to the (R)-pantoate binding site. Valine 184–arginine 187 contributes to the ATP binding site.

Belongs to the pantothenate synthetase family. Homodimer.

It localises to the cytoplasm. It catalyses the reaction (R)-pantoate + beta-alanine + ATP = (R)-pantothenate + AMP + diphosphate + H(+). It participates in cofactor biosynthesis; (R)-pantothenate biosynthesis; (R)-pantothenate from (R)-pantoate and beta-alanine: step 1/1. Its function is as follows. Catalyzes the condensation of pantoate with beta-alanine in an ATP-dependent reaction via a pantoyl-adenylate intermediate. This Chlorobium phaeovibrioides (strain DSM 265 / 1930) (Prosthecochloris vibrioformis (strain DSM 265)) protein is Pantothenate synthetase.